Here is a 96-residue protein sequence, read N- to C-terminus: Co-chaperonin GroES (96 aa).

It belongs to the GroES chaperonin family. As to quaternary structure, heptamer of 7 subunits arranged in a ring. Interacts with the chaperonin GroEL.

The protein resides in the cytoplasm. Functionally, together with the chaperonin GroEL, plays an essential role in assisting protein folding. The GroEL-GroES system forms a nano-cage that allows encapsulation of the non-native substrate proteins and provides a physical environment optimized to promote and accelerate protein folding. GroES binds to the apical surface of the GroEL ring, thereby capping the opening of the GroEL channel. This chain is Co-chaperonin GroES, found in Acinetobacter baylyi (strain ATCC 33305 / BD413 / ADP1).